Consider the following 77-residue polypeptide: uncharacterized protein (77 aa).

Residues 5-74 (SYIVQLKDSV…FEPDQEMHTM (70 aa)) form the Inhibitor I9 domain.

The protein belongs to the protease inhibitor I9 family.

Its subcellular location is the cytoplasm. The protein resides in the nucleus. This is an uncharacterized protein from Schizosaccharomyces pombe (strain 972 / ATCC 24843) (Fission yeast).